Here is an 803-residue protein sequence, read N- to C-terminus: Cation channel sperm-associated auxiliary subunit delta (803 aa).

A signal peptide spans 1 to 15 (MLMLMLAAVATVVRA). The Extracellular portion of the chain corresponds to 16–720 (QTVCRFRTVR…ALPVAEFRPM (705 aa)). 7 disulfide bridges follow: Cys-19–Cys-365, Cys-55–Cys-142, Cys-141–Cys-148, Cys-383–Cys-492, Cys-506–Cys-698, Cys-521–Cys-568, and Cys-620–Cys-648. 7 N-linked (GlcNAc...) asparagine glycosylation sites follow: Asn-226, Asn-418, Asn-436, Asn-468, Asn-534, Asn-545, and Asn-626. Residues 721–742 (TSILLMVTVTLFTMWLAYAIPK) form a helical membrane-spanning segment. Residues 743–803 (QLRTERGRRL…QIGKKPDIKK (61 aa)) are Cytoplasmic-facing. Positions 782–803 (SRRVKDQPEKIPQIGKKPDIKK) are disordered.

Belongs to the CATSPERD family. As to quaternary structure, component of the CatSper complex or CatSpermasome composed of the core pore-forming members CATSPER1, CATSPER2, CATSPER3 and CATSPER4 as well as auxiliary members CATSPERB, CATSPERG, CATSPERD, CATSPERE, CATSPERZ, C2CD6/CATSPERT, SLCO6C1, TMEM249, TMEM262 and EFCAB9. HSPA1 may be an additional auxiliary complex member. The core complex members CATSPER1, CATSPER2, CATSPER3 and CATSPER4 form a heterotetrameric channel. The auxiliary CATSPERB, CATSPERG, CATSPERD and CATSPERE subunits form a pavilion-like structure over the pore which stabilizes the complex through interactions with CATSPER4, CATSPER3, CATSPER1 and CATSPER2 respectively. SLCO6C1 interacts with CATSPERE and TMEM262/CATSPERH interacts with CATSPERB, further stabilizing the complex. C2CD6/CATSPERT interacts at least with CATSPERD and is required for targeting the CatSper complex in the flagellar membrane.

It is found in the cell projection. The protein localises to the cilium. The protein resides in the flagellum membrane. Auxiliary component of the CatSper complex, a complex involved in sperm cell hyperactivation. Sperm cell hyperactivation is needed for sperm motility which is essential late in the preparation of sperm for fertilization. Required for CATSPER1 stability before intraflagellar transport and/or incorporation of the CatSper complex channel into the flagellar membrane. The sequence is that of Cation channel sperm-associated auxiliary subunit delta from Rattus norvegicus (Rat).